Consider the following 107-residue polypeptide: Ferredoxin 1 (107 aa).

4Fe-4S ferredoxin-type domains lie at 2–30 and 31–60; these read TFVV…YEGP and NFLV…SEDE. [3Fe-4S] cluster contacts are provided by C9 and C17. 4 residues coordinate [4Fe-4S] cluster: C21, C40, C43, and C46. C50 contributes to the [3Fe-4S] cluster binding site.

[4Fe-4S] cluster is required as a cofactor. The cofactor is [3Fe-4S] cluster.

Its function is as follows. Ferredoxins are iron-sulfur proteins that transfer electrons in a wide variety of metabolic reactions. This is Ferredoxin 1 (fdxA) from Pseudomonas aeruginosa (strain ATCC 15692 / DSM 22644 / CIP 104116 / JCM 14847 / LMG 12228 / 1C / PRS 101 / PAO1).